The following is a 246-amino-acid chain: Pyridoxine 5'-phosphate synthase (246 aa).

Residue N12 coordinates 3-amino-2-oxopropyl phosphate. Position 14–15 (14–15 (DH)) interacts with 1-deoxy-D-xylulose 5-phosphate. Residue R23 coordinates 3-amino-2-oxopropyl phosphate. The Proton acceptor role is filled by H48. The 1-deoxy-D-xylulose 5-phosphate site is built by R50 and H55. The Proton acceptor role is filled by E75. T105 contributes to the 1-deoxy-D-xylulose 5-phosphate binding site. H196 (proton donor) is an active-site residue. 3-amino-2-oxopropyl phosphate is bound by residues G197 and 218-219 (GH).

This sequence belongs to the PNP synthase family. In terms of assembly, homooctamer; tetramer of dimers.

The protein localises to the cytoplasm. It carries out the reaction 3-amino-2-oxopropyl phosphate + 1-deoxy-D-xylulose 5-phosphate = pyridoxine 5'-phosphate + phosphate + 2 H2O + H(+). It participates in cofactor biosynthesis; pyridoxine 5'-phosphate biosynthesis; pyridoxine 5'-phosphate from D-erythrose 4-phosphate: step 5/5. Catalyzes the complicated ring closure reaction between the two acyclic compounds 1-deoxy-D-xylulose-5-phosphate (DXP) and 3-amino-2-oxopropyl phosphate (1-amino-acetone-3-phosphate or AAP) to form pyridoxine 5'-phosphate (PNP) and inorganic phosphate. The protein is Pyridoxine 5'-phosphate synthase of Pseudomonas putida (strain GB-1).